Here is a 570-residue protein sequence, read N- to C-terminus: Ferroportin (570 aa).

Over 1–23 the chain is Cytoplasmic; it reads MTKSRDQTHQEGCCGSLANYLTS. The helical transmembrane segment at 24-53 threads the bilayer; sequence AKFLLYLGHSLSTWGDRMWHFAVSVFLVEL. Fe cation contacts are provided by Asp39 and His43. The Extracellular segment spans residues 54–57; the sequence is YGNS. The chain crosses the membrane as a helical span at residues 58-84; it reads LLLTAVYGLVVAGSVLVLGAIIGDWVD. Residues 85-87 lie on the Cytoplasmic side of the membrane; it reads KNA. Residues 88 to 118 form a helical membrane-spanning segment; it reads RLKVAQTSLVVQNVSVILCGIILMMVFLHKN. The Extracellular portion of the chain corresponds to 119–126; it reads ELLNMYHG. A helical membrane pass occupies residues 127–162; it reads WVLTVCYILIITIANIANLASTATAITIQRDWIVVV. Residues 163–164 are Cytoplasmic-facing; that stretch reads AG. Residues 165-195 traverse the membrane as a helical segment; the sequence is ENRSRLADMNATIRRIDQLTNILAPMAVGQI. The Extracellular segment spans residues 196–202; it reads MTFGSPV. Residues 203 to 229 form a helical membrane-spanning segment; the sequence is IGCGFISGWNLVSMCVEYFLLWKVYQK. The Cytoplasmic portion of the chain corresponds to 230 to 306; that stretch reads TPALAVKAAL…DGWVSYYNQP (77 aa). The helical transmembrane segment at 307-333 threads the bilayer; it reads VFLAGMGLAFLYMTVLGFDCITTGYAY. Position 326 (Cys326) interacts with Fe cation. Residues 334-338 are Extracellular-facing; the sequence is TQGLS. A helical transmembrane segment spans residues 339-366; the sequence is GSILSVLMGASAITGIMGTVAFTWLRRK. Residues 367 to 368 lie on the Cytoplasmic side of the membrane; it reads CG. A helical transmembrane segment spans residues 369–391; it reads LVRTGLFSGLAQLSCLILCVISV. Topologically, residues 392-452 are extracellular; that stretch reads FMPGSPLDLS…EMSTKSVPII (61 aa). Residues 453-482 traverse the membrane as a helical segment; sequence SVSLLFAGVIAARIGLWSFDLTVTQLLQEN. Residues 483-487 lie on the Cytoplasmic side of the membrane; that stretch reads VIESE. Residues 488–512 traverse the membrane as a helical segment; that stretch reads RGIINGVQNSMNYLLDLLHFIMVIL. His506 contributes to the Fe cation binding site. The Extracellular segment spans residues 513-515; that stretch reads APN. A helical membrane pass occupies residues 516-541; it reads PEAFGLLVLISVSFVAMGHLMYFRFA. Topologically, residues 542–570 are cytoplasmic; that stretch reads QKTLGNQIFVCAPDEKEVTDESQPNTSVV.

It belongs to the ferroportin (FP) (TC 2.A.100) family. SLC40A subfamily. As to quaternary structure, identified in a complex with STOM. Interacts with HAMP; affinity of the peptide hormone HAMP for SLC40A1 increases by 80-fold in the presence of iron and the interaction promotes SLC40A1 ubiquitination and degradation. Part of a complex composed of SLC40A1/ferroportin, TF/transferrin and HEPH/hephaestin that transfers iron from cells to transferrin. Post-translationally, polyubiquitinated by RNF217; leading to proteasomal degradation. Under conditions of high systemic iron levels, both the hormone peptide hepcidin/HAMP and holo(iron bound)-transferrin/TF induce the ubiquitination, internalization and proteasomal degradation of SLC40A1 to control iron release from cells.

It localises to the cell membrane. The protein resides in the basolateral cell membrane. It carries out the reaction Fe(2+)(in) = Fe(2+)(out). During elevated serum iron levels, liver-derived hepcidin/HAMP negatively regulates cell surface SLC40A1 by inducing its ubiquitination, internalization, and degradation. Indeed, hepcidin/HAMP affinity towards ferroportin/SLC40A1 increases by 80-fold in the presence of iron. Transports Fe(2+) from the inside of a cell to the outside of the cell, playing a key role for maintaining systemic iron homeostasis. Transports iron from intestinal, splenic, hepatic cells, macrophages and erythrocytes into the blood to provide iron to other tissues. Controls therefore dietary iron uptake, iron recycling by macrophages and erythrocytes, and release of iron stores in hepatocytes. When iron is in excess in serum, circulating HAMP/hepcidin levels increase resulting in a degradation of SLC40A1, thus limiting the iron efflux to plasma. The sequence is that of Ferroportin from Rattus norvegicus (Rat).